Reading from the N-terminus, the 257-residue chain is Major prion protein (257 aa).

The N-terminal stretch at 1–24 is a signal peptide; that stretch reads MVKSHIGSWLLVLFVATWSDIGFC. The segment at 25–41 is interaction with ADGRG6; sequence KKRPKPGGGWNTGGSRY. The tract at residues 25 to 234 is interaction with GRB2, ERI3 and SYN1; sequence KKRPKPGGGW…ESEAYYQRGA (210 aa). The disordered stretch occupies residues 27-114; the sequence is RPKPGGGWNT…KPSKPKTNMK (88 aa). 5 repeat units span residues 54–62, 63–70, 71–78, 79–86, and 87–95. Residues 54–95 form a 5 X 8 AA tandem repeats of P-H-G-G-G-W-G-Q region; sequence PQGGGGWGQPHGGGWGQPHGGGWGQPHGGGWGQPHGGGGWGQ. Residues 55–101 show a composition bias toward gly residues; the sequence is QGGGGWGQPHGGGWGQPHGGGWGQPHGGGWGQPHGGGGWGQGGGSHG. Cu(2+) contacts are provided by His64, Gly65, Gly66, His72, Gly73, Gly74, His80, Gly81, Gly82, His88, Gly90, and Gly91. Cysteines 183 and 218 form a disulfide. N-linked (GlcNAc...) asparagine glycosylation is found at Asn185 and Asn201. Ala234 is lipidated: GPI-anchor amidated alanine. A propeptide spans 235–257 (removed in mature form); that stretch reads SAILFSPPPVILLISLLILLIVG.

This sequence belongs to the prion family. As to quaternary structure, monomer and homodimer. Has a tendency to aggregate into amyloid fibrils containing a cross-beta spine, formed by a steric zipper of superposed beta-strands. Soluble oligomers may represent an intermediate stage on the path to fibril formation. Copper binding may promote oligomerization. Interacts with GRB2, APP, ERI3/PRNPIP and SYN1. Mislocalized cytosolically exposed PrP interacts with MGRN1; this interaction alters MGRN1 subcellular location and causes lysosomal enlargement. Interacts with APP. Interacts with KIAA1191. Interacts with ADGRG6.

Its subcellular location is the cell membrane. The protein localises to the golgi apparatus. Its function is as follows. Its primary physiological function is unclear. May play a role in neuronal development and synaptic plasticity. May be required for neuronal myelin sheath maintenance. May promote myelin homeostasis through acting as an agonist for ADGRG6 receptor. May play a role in iron uptake and iron homeostasis. Soluble oligomers are toxic to cultured neuroblastoma cells and induce apoptosis (in vitro). Association with GPC1 (via its heparan sulfate chains) targets PRNP to lipid rafts. Also provides Cu(2+) or Zn(2+) for the ascorbate-mediated GPC1 deaminase degradation of its heparan sulfate side chains. The polypeptide is Major prion protein (PRNP) (Neovison vison (American mink)).